We begin with the raw amino-acid sequence, 47 residues long: MNRCLLLNLSHRSGEDSFPALCISALHTCRCYTHLGASQDSRAGYSY.

This Escherichia coli (strain K12) protein is Protein YqgG.